Reading from the N-terminus, the 104-residue chain is uncharacterized protein (104 aa).

The chain crosses the membrane as a helical span at residues 81–97 (CLLMLPCISVVMSISSV).

The protein resides in the cell membrane. This is an uncharacterized protein from Bacillus subtilis (strain 168).